A 116-amino-acid polypeptide reads, in one-letter code: NADH-ubiquinone oxidoreductase chain 3 (116 aa).

A run of 3 helical transmembrane segments spans residues 3 to 23 (LITT…TISF), 56 to 76 (FFLI…LLPL), and 87 to 107 (LTLI…IYEW).

The protein belongs to the complex I subunit 3 family.

The protein localises to the mitochondrion membrane. It carries out the reaction a ubiquinone + NADH + 5 H(+)(in) = a ubiquinol + NAD(+) + 4 H(+)(out). Core subunit of the mitochondrial membrane respiratory chain NADH dehydrogenase (Complex I) that is believed to belong to the minimal assembly required for catalysis. Complex I functions in the transfer of electrons from NADH to the respiratory chain. The immediate electron acceptor for the enzyme is believed to be ubiquinone. This chain is NADH-ubiquinone oxidoreductase chain 3 (MT-ND3), found in Oncorhynchus mykiss (Rainbow trout).